A 451-amino-acid chain; its full sequence is COBRA-like protein 6 (451 aa).

The signal sequence occupies residues 1 to 21; it reads MAVLGSLLLLILAATLSVAVA. Residues Asn-30, Asn-155, Asn-163, Asn-202, Asn-227, Asn-323, Asn-338, and Asn-357 are each glycosylated (N-linked (GlcNAc...) asparagine). Asn-426 carries the GPI-anchor amidated asparagine lipid modification. Residues 427-451 constitute a propeptide, removed in mature form; it reads AAPPAAASLVGSAVAMAALVFFLMA.

The protein belongs to the COBRA family.

It is found in the cell membrane. Involved in determining the orientation of cell expansion, probably by playing an important role in cellulose deposition. May act by recruiting cellulose synthesizing complexes to discrete positions on the cell surface. This is COBRA-like protein 6 (BC1L7) from Oryza sativa subsp. japonica (Rice).